A 279-amino-acid chain; its full sequence is MKLAQLFSNFEEELIRQGEEAESLSFVYRSLKNLSFTDFIFALQQEVTTEEEKQFVEDIYQQLAAHKPAQYIIGQADFYGMHLKVDERVLIPRPETEELVELILTENLETNLSVLDIGTGSGAIALALAKNRPDWSVTAADISQEALDLARENAKNQNLQIFLKKSDCFTEISEKYDIIVSNPPYISREDESEVGLNVLYSEPHLALFADEDGLAIYRRIAEDATDYLKDSGKIYLEIGYKQGQCVPELFRKHLPEKRVRTLKDQFGQNRMVVVDDGQD.

S-adenosyl-L-methionine is bound by residues 118–122, Asp141, and Asn182; that span reads GTGSG. Residue 182–185 coordinates substrate; that stretch reads NPPY.

It belongs to the protein N5-glutamine methyltransferase family. PrmC subfamily.

The enzyme catalyses L-glutaminyl-[peptide chain release factor] + S-adenosyl-L-methionine = N(5)-methyl-L-glutaminyl-[peptide chain release factor] + S-adenosyl-L-homocysteine + H(+). In terms of biological role, methylates the class 1 translation termination release factors RF1/PrfA and RF2/PrfB on the glutamine residue of the universally conserved GGQ motif. This is Release factor glutamine methyltransferase from Streptococcus pneumoniae (strain ATCC BAA-255 / R6).